We begin with the raw amino-acid sequence, 629 residues long: tRNA uridine 5-carboxymethylaminomethyl modification enzyme MnmG (629 aa).

13–18 (GGGHAG) contacts FAD. 273–287 (GPRYCPSIEDKIVRF) contributes to the NAD(+) binding site.

It belongs to the MnmG family. Homodimer. Heterotetramer of two MnmE and two MnmG subunits. FAD is required as a cofactor.

The protein resides in the cytoplasm. NAD-binding protein involved in the addition of a carboxymethylaminomethyl (cmnm) group at the wobble position (U34) of certain tRNAs, forming tRNA-cmnm(5)s(2)U34. The polypeptide is tRNA uridine 5-carboxymethylaminomethyl modification enzyme MnmG (Pseudoalteromonas translucida (strain TAC 125)).